A 690-amino-acid chain; its full sequence is Glycine--tRNA ligase beta subunit (690 aa).

This sequence belongs to the class-II aminoacyl-tRNA synthetase family. Tetramer of two alpha and two beta subunits.

Its subcellular location is the cytoplasm. The catalysed reaction is tRNA(Gly) + glycine + ATP = glycyl-tRNA(Gly) + AMP + diphosphate. The sequence is that of Glycine--tRNA ligase beta subunit from Syntrophus aciditrophicus (strain SB).